The chain runs to 448 residues: Signal recognition particle protein (448 aa).

GTP-binding positions include 101 to 108 (GLQGSGKT), 182 to 186 (DSAGR), and 240 to 243 (SKFD).

It belongs to the GTP-binding SRP family. SRP54 subfamily. Part of the signal recognition particle protein translocation system, which is composed of SRP and FtsY. SRP is a ribonucleoprotein composed of Ffh and a 4.5S RNA molecule.

The protein resides in the cytoplasm. The catalysed reaction is GTP + H2O = GDP + phosphate + H(+). Its function is as follows. Involved in targeting and insertion of nascent membrane proteins into the cytoplasmic membrane. Binds to the hydrophobic signal sequence of the ribosome-nascent chain (RNC) as it emerges from the ribosomes. The SRP-RNC complex is then targeted to the cytoplasmic membrane where it interacts with the SRP receptor FtsY. Interaction with FtsY leads to the transfer of the RNC complex to the Sec translocase for insertion into the membrane, the hydrolysis of GTP by both Ffh and FtsY, and the dissociation of the SRP-FtsY complex into the individual components. The protein is Signal recognition particle protein of Helicobacter pylori (strain J99 / ATCC 700824) (Campylobacter pylori J99).